We begin with the raw amino-acid sequence, 547 residues long: Dihydroxy-acid dehydratase (547 aa).

A Mg(2+)-binding site is contributed by D78. C119 is a binding site for [2Fe-2S] cluster. The Mg(2+) site is built by D120 and K121. Position 121 is an N6-carboxylysine (K121). C191 contacts [2Fe-2S] cluster. E439 is a Mg(2+) binding site. The active-site Proton acceptor is S464.

This sequence belongs to the IlvD/Edd family. Homodimer. It depends on [2Fe-2S] cluster as a cofactor. Mg(2+) serves as cofactor.

It catalyses the reaction (2R)-2,3-dihydroxy-3-methylbutanoate = 3-methyl-2-oxobutanoate + H2O. It carries out the reaction (2R,3R)-2,3-dihydroxy-3-methylpentanoate = (S)-3-methyl-2-oxopentanoate + H2O. It participates in amino-acid biosynthesis; L-isoleucine biosynthesis; L-isoleucine from 2-oxobutanoate: step 3/4. It functions in the pathway amino-acid biosynthesis; L-valine biosynthesis; L-valine from pyruvate: step 3/4. In terms of biological role, functions in the biosynthesis of branched-chain amino acids. Catalyzes the dehydration of (2R,3R)-2,3-dihydroxy-3-methylpentanoate (2,3-dihydroxy-3-methylvalerate) into 2-oxo-3-methylpentanoate (2-oxo-3-methylvalerate) and of (2R)-2,3-dihydroxy-3-methylbutanoate (2,3-dihydroxyisovalerate) into 2-oxo-3-methylbutanoate (2-oxoisovalerate), the penultimate precursor to L-isoleucine and L-valine, respectively. This Archaeoglobus fulgidus (strain ATCC 49558 / DSM 4304 / JCM 9628 / NBRC 100126 / VC-16) protein is Dihydroxy-acid dehydratase.